The sequence spans 473 residues: Ion-translocating oxidoreductase complex subunit C (473 aa).

4Fe-4S ferredoxin-type domains lie at 328-357 and 368-396; these read KNES…QQLY and TKKH…VKYF. Cys337, Cys340, Cys343, Cys347, Cys376, Cys379, Cys382, and Cys386 together coordinate [4Fe-4S] cluster.

It belongs to the 4Fe4S bacterial-type ferredoxin family. RnfC subfamily. As to quaternary structure, the complex is composed of six subunits: RnfA, RnfB, RnfC, RnfD, RnfE and RnfG. The cofactor is [4Fe-4S] cluster.

The protein localises to the cell inner membrane. In terms of biological role, part of a membrane-bound complex that couples electron transfer with translocation of ions across the membrane. The chain is Ion-translocating oxidoreductase complex subunit C from Buchnera aphidicola subsp. Acyrthosiphon pisum (strain APS) (Acyrthosiphon pisum symbiotic bacterium).